The sequence spans 145 residues: Small ribosomal subunit protein uS19 (145 aa).

This sequence belongs to the universal ribosomal protein uS19 family. Component of the small ribosomal subunit.

It is found in the cytoplasm. In terms of biological role, component of the small ribosomal subunit. The ribosome is a large ribonucleoprotein complex responsible for the synthesis of proteins in the cell. The chain is Small ribosomal subunit protein uS19 (rps15) from Xenopus laevis (African clawed frog).